A 38-amino-acid chain; its full sequence is Mu/omega-theraphotoxin-Mb1b (38 aa).

Cystine bridges form between Cys7-Cys21, Cys14-Cys26, and Cys20-Cys33. A Serine amide modification is found at Ser38.

Belongs to the neurotoxin 10 (Hwtx-1) family. 28 (Jztx-11) subfamily. As to expression, expressed by the venom gland.

Its subcellular location is the secreted. Functionally, paralytic toxin on insects that inhibits voltage-gated sodium (Nav) and calcium (Cav) channels in P.americana (American cockroach) dorsal unpaired median (DUM) neurons, and also inhibits the B.germanica (German cockroach) Nav channel (BgNaV1). May act as a gating-modifier toxin on Nav and as a pore blocker on Cav. In vivo, reversibly paralyzes both L.cuprina (Australian sheep blowfly) and M.domestica (housefly), but does not affect larvae of H.armigera (cotton bollworms). The sequence is that of Mu/omega-theraphotoxin-Mb1b from Monocentropus balfouri (Socotra Island blue baboon tarantula).